The following is a 235-amino-acid chain: Urease accessory protein UreF (235 aa).

This sequence belongs to the UreF family. As to quaternary structure, ureD, UreF and UreG form a complex that acts as a GTP-hydrolysis-dependent molecular chaperone, activating the urease apoprotein by helping to assemble the nickel containing metallocenter of UreC. The UreE protein probably delivers the nickel.

The protein localises to the cytoplasm. Functionally, required for maturation of urease via the functional incorporation of the urease nickel metallocenter. This chain is Urease accessory protein UreF, found in Ureaplasma parvum serovar 3 (strain ATCC 27815 / 27 / NCTC 11736).